The following is a 220-amino-acid chain: Cysteine-rich venom protein (220 aa).

An SCP domain is found at 20–147; it reads DLHNSLRRSV…AYKYFYVCQY (128 aa). Disulfide bonds link Cys-56/Cys-134, Cys-73/Cys-148, Cys-129/Cys-145, Cys-167/Cys-174, Cys-170/Cys-179, Cys-183/Cys-215, Cys-192/Cys-209, and Cys-200/Cys-213. The ShKT domain occupies 183–215; sequence CTREDEFINCNDLVKQGCQTDYLKSNCAASCFC.

In terms of tissue distribution, expressed by the venom gland.

It localises to the secreted. Functionally, blocks contraction of smooth muscle elicited by high potassium-induced depolarization, but does not block caffeine-stimulated contraction. May target voltage-gated calcium channels in smooth muscle. The sequence is that of Cysteine-rich venom protein from Echis coloratus (Carpet viper).